The following is a 205-amino-acid chain: tRNA 2-(methylsulfanyl)-N(6)-isopentenyladenosine(37) hydroxylase (205 aa).

Fe cation contacts are provided by Glu-38, Glu-69, His-72, Glu-122, Glu-151, and His-154.

This sequence belongs to the MiaE family. Homodimer. Fe cation is required as a cofactor.

It carries out the reaction 2-methylsulfanyl-N(6)-dimethylallyladenosine(37) in tRNA + AH2 + O2 = N(6)-[(2E)-4-hydroxy-3-methylbut-2-en-1-yl]-2-(methylsulfanyl)adenosine(37) in tRNA + A + H2O. It participates in tRNA modification; 2-methylthio-N-6-(cis-hydroxy)isopentenyl adenosine-tRNA biosynthesis. Involved in specific tRNA modification. Catalyzes the oxygen-dependent hydroxylation of 2-methylthio-N-6-isopentenyl adenosine (ms2i6A) to produce 2-methylthio-N-6-(cis-hydroxy)isopentenyl adenosine (ms2io6A) at position 37 in tRNAs. The protein is tRNA 2-(methylsulfanyl)-N(6)-isopentenyladenosine(37) hydroxylase of Pseudomonas putida (strain ATCC 47054 / DSM 6125 / CFBP 8728 / NCIMB 11950 / KT2440).